The sequence spans 166 residues: Phosphopantetheine adenylyltransferase (166 aa).

Serine 9 provides a ligand contact to substrate. ATP-binding positions include serine 9 to phenylalanine 10 and histidine 17. Lysine 41, threonine 74, and arginine 88 together coordinate substrate. ATP is bound by residues glycine 89–arginine 91, glutamate 99, and aspartate 124–serine 130.

It belongs to the bacterial CoaD family. Homohexamer. It depends on Mg(2+) as a cofactor.

The protein localises to the cytoplasm. The catalysed reaction is (R)-4'-phosphopantetheine + ATP + H(+) = 3'-dephospho-CoA + diphosphate. Its pathway is cofactor biosynthesis; coenzyme A biosynthesis; CoA from (R)-pantothenate: step 4/5. Its function is as follows. Reversibly transfers an adenylyl group from ATP to 4'-phosphopantetheine, yielding dephospho-CoA (dPCoA) and pyrophosphate. In Lactobacillus gasseri (strain ATCC 33323 / DSM 20243 / BCRC 14619 / CIP 102991 / JCM 1131 / KCTC 3163 / NCIMB 11718 / NCTC 13722 / AM63), this protein is Phosphopantetheine adenylyltransferase.